Here is a 221-residue protein sequence, read N- to C-terminus: UPF0758 protein CGSHiEE_07200 (221 aa).

The 123-residue stretch at 99-221 (IINDPETVKL…CYSFAENCLL (123 aa)) folds into the MPN domain. His-170, His-172, and Asp-183 together coordinate Zn(2+). The short motif at 170–183 (HNHPSGVTEPSYSD) is the JAMM motif element.

It belongs to the UPF0758 family.

The sequence is that of UPF0758 protein CGSHiEE_07200 from Haemophilus influenzae (strain PittEE).